The following is a 447-amino-acid chain: Phosphoglucosamine mutase (447 aa).

Ser101 (phosphoserine intermediate) is an active-site residue. Residues Ser101, Asp242, Asp244, and Asp246 each coordinate Mg(2+). Ser101 carries the phosphoserine modification.

The protein belongs to the phosphohexose mutase family. Mg(2+) is required as a cofactor. Activated by phosphorylation.

The enzyme catalyses alpha-D-glucosamine 1-phosphate = D-glucosamine 6-phosphate. In terms of biological role, catalyzes the conversion of glucosamine-6-phosphate to glucosamine-1-phosphate. The sequence is that of Phosphoglucosamine mutase from Methylobacterium radiotolerans (strain ATCC 27329 / DSM 1819 / JCM 2831 / NBRC 15690 / NCIMB 10815 / 0-1).